The sequence spans 257 residues: Acyl-[acyl-carrier-protein]--UDP-N-acetylglucosamine O-acyltransferase (257 aa).

This sequence belongs to the transferase hexapeptide repeat family. LpxA subfamily. As to quaternary structure, homotrimer.

The protein resides in the cytoplasm. The enzyme catalyses a (3R)-hydroxyacyl-[ACP] + UDP-N-acetyl-alpha-D-glucosamine = a UDP-3-O-[(3R)-3-hydroxyacyl]-N-acetyl-alpha-D-glucosamine + holo-[ACP]. The protein operates within glycolipid biosynthesis; lipid IV(A) biosynthesis; lipid IV(A) from (3R)-3-hydroxytetradecanoyl-[acyl-carrier-protein] and UDP-N-acetyl-alpha-D-glucosamine: step 1/6. Functionally, involved in the biosynthesis of lipid A, a phosphorylated glycolipid that anchors the lipopolysaccharide to the outer membrane of the cell. This Anaeromyxobacter sp. (strain Fw109-5) protein is Acyl-[acyl-carrier-protein]--UDP-N-acetylglucosamine O-acyltransferase.